A 426-amino-acid polypeptide reads, in one-letter code: Actin-like protein 6B (426 aa).

Residues 39-82 (TTVGLLAAEEGGGLELEGDKEKKGKIFHIDTNALHVPRDGAEVM) are essential for mediating its function in dendritic development; may contribute to neuronal-specific targeting.

The protein belongs to the actin family. Component of the multiprotein chromatin-remodeling complexes SWI/SNF: SWI/SNF-A (BAF), SWI/SNF-B (PBAF) and related complexes. The canonical complex contains a catalytic subunit (either SMARCA4/BRG1/BAF190A or SMARCA2/BRM/BAF190B) and at least SMARCE1, ACTL6A/BAF53, SMARCC1/BAF155, SMARCC2/BAF170 and SMARCB1/SNF5/BAF47. Other subunits specific to each of the complexes may also be present permitting several possible combinations developmentally and tissue specific. Component of the BAF complex, which includes at least actin (ACTB), ARID1A/BAF250A, ARID1B/BAF250B, SMARCA2/BRM, SMARCA4/BRG1/BAF190A, ACTL6A/BAF53, ACTL6B/BAF53B, SMARCE1/BAF57, SMARCC1/BAF155, SMARCC2/BAF170, SMARCB1/SNF5/INI1 and one or more SMARCD1/BAF60A, SMARCD2/BAF60B, or SMARCD3/BAF60C. Component of neuron-specific chromatin remodeling complex (nBAF complex) composed of at least, ARID1A/BAF250A or ARID1B/BAF250B, SMARCD1/BAF60A or SMARCD2/BAF60B or SMARCD3/BAF60C, SMARCA2/BRM/BAF190B, SMARCA4/BRG1/BAF190A, SMARCB1/BAF47, SMARCC1/BAF155, SMARCE1/BAF57, SMARCC2/BAF170, DPF1/BAF45B, DPF3/BAF45C, ACTL6B/BAF53B and actin (ACTB). Note that the nBAF complex is polymorphic in regard to the ATPase, SMARCA2 and SMARCA4 occupying mutually exclusive positions. May be a component of the SWI/SNF-B (PBAF) chromatin remodeling complex, at least composed of SMARCA4/BRG1, SMARCB1/BAF47/SNF5, ACTL6A/BAF53A or ACTL6B/BAF53B, SMARCE1/BAF57, SMARCD1/BAF60A, SMARCD2/BAF60B, perhaps SMARCD3/BAF60C, SMARCC1/BAF155, SMARCC2/BAF170, PBRM1/BAF180, ARID2/BAF200 and actin.

It localises to the nucleus. In terms of biological role, involved in transcriptional activation and repression of select genes by chromatin remodeling (alteration of DNA-nucleosome topology). Component of SWI/SNF chromatin remodeling complexes that carry out key enzymatic activities, changing chromatin structure by altering DNA-histone contacts within a nucleosome in an ATP-dependent manner. Belongs to the neuron-specific chromatin remodeling complex (nBAF complex), as such plays a role in remodeling mononucleosomes in an ATP-dependent fashion, and is required for postmitotic neural development and dendritic outgrowth. During neural development a switch from a stem/progenitor to a postmitotic chromatin remodeling mechanism occurs as neurons exit the cell cycle and become committed to their adult state. The transition from proliferating neural stem/progenitor cells to postmitotic neurons requires a switch in subunit composition of the npBAF and nBAF complexes. As neural progenitors exit mitosis and differentiate into neurons, npBAF complexes which contain ACTL6A/BAF53A and PHF10/BAF45A, are exchanged for homologous alternative ACTL6B/BAF53B and DPF1/BAF45B or DPF3/BAF45C subunits in neuron-specific complexes (nBAF). The npBAF complex is essential for the self-renewal/proliferative capacity of the multipotent neural stem cells. The nBAF complex along with CREST plays a role regulating the activity of genes essential for dendrite growth. ACTL6B/BAF53B is not essential for assembly of the nBAF complex but is required for targeting the complex and CREST to the promoter of genes essential for dendritic growth. Essential for neuronal maturation and dendrite development. In Homo sapiens (Human), this protein is Actin-like protein 6B.